Here is a 606-residue protein sequence, read N- to C-terminus: DNA mismatch repair protein MutL (606 aa).

Residues 350 to 371 (GWRPSAPSAPWTPEASPSRPYQ) are disordered.

This sequence belongs to the DNA mismatch repair MutL/HexB family.

This protein is involved in the repair of mismatches in DNA. It is required for dam-dependent methyl-directed DNA mismatch repair. May act as a 'molecular matchmaker', a protein that promotes the formation of a stable complex between two or more DNA-binding proteins in an ATP-dependent manner without itself being part of a final effector complex. This Rhizobium rhizogenes (strain K84 / ATCC BAA-868) (Agrobacterium radiobacter) protein is DNA mismatch repair protein MutL.